The sequence spans 131 residues: Transcription antitermination protein NusB (131 aa).

It belongs to the NusB family.

Involved in transcription antitermination. Required for transcription of ribosomal RNA (rRNA) genes. Binds specifically to the boxA antiterminator sequence of the ribosomal RNA (rrn) operons. The protein is Transcription antitermination protein NusB of Caldicellulosiruptor saccharolyticus (strain ATCC 43494 / DSM 8903 / Tp8T 6331).